A 317-amino-acid chain; its full sequence is Transaldolase (317 aa).

Lys-126 functions as the Schiff-base intermediate with substrate in the catalytic mechanism.

It belongs to the transaldolase family. Type 1 subfamily. Homodimer.

The protein resides in the cytoplasm. It carries out the reaction D-sedoheptulose 7-phosphate + D-glyceraldehyde 3-phosphate = D-erythrose 4-phosphate + beta-D-fructose 6-phosphate. It participates in carbohydrate degradation; pentose phosphate pathway; D-glyceraldehyde 3-phosphate and beta-D-fructose 6-phosphate from D-ribose 5-phosphate and D-xylulose 5-phosphate (non-oxidative stage): step 2/3. Functionally, transaldolase is important for the balance of metabolites in the pentose-phosphate pathway. The protein is Transaldolase of Burkholderia orbicola (strain AU 1054).